A 331-amino-acid polypeptide reads, in one-letter code: Glucokinase (331 aa).

Residue 16 to 21 participates in ATP binding; sequence GDIGGT.

The protein belongs to the bacterial glucokinase family.

It is found in the cytoplasm. The catalysed reaction is D-glucose + ATP = D-glucose 6-phosphate + ADP + H(+). The polypeptide is Glucokinase (Pseudomonas aeruginosa (strain UCBPP-PA14)).